The sequence spans 520 residues: Legumin A2 (520 aa).

A signal peptide spans 1–22 (MATKLLALSLSFCFLLLGGCFA). Intrachain disulfides connect Cys32-Cys65 and Cys108-Cys342. Residues 37–233 (LNALEPDNRI…AFNVNRHIVD (197 aa)) enclose the Cupin type-1 1 domain. Positions 250–339 (VKGGLSIISP…RRQGDNGLEE (90 aa)) are disordered. A Cupin type-1 2 domain is found at 348 to 497 (LNIGPSSSPD…TFNLQRNEAR (150 aa)).

The protein belongs to the 11S seed storage protein (globulins) family. As to quaternary structure, hexamer; each subunit is composed of an acidic and a basic chain derived from a single precursor and linked by a disulfide bond.

This protein found in the seeds of many leguminous and non-leguminous plants is the source of sulfur-containing amino acids in seed meals. This is Legumin A2 (LEGA2) from Pisum sativum (Garden pea).